A 601-amino-acid chain; its full sequence is N-acetyltransferase ESCO2 (601 aa).

Phosphoserine occurs at positions 29, 75, 223, and 244. The segment at 222-243 is disordered; sequence SSLENEPSLGRTQKSKSEVIED. Positions 282-305 are enriched in basic and acidic residues; sequence KEKLIKDSSDDRVSSKEHKVDKNE. Residues 282-315 are disordered; the sequence is KEKLIKDSSDDRVSSKEHKVDKNEAFSSEDSLGE. Residues 306 to 315 are compositionally biased toward polar residues; the sequence is AFSSEDSLGE. Phosphoserine is present on Ser-312. The segment at 387 to 411 adopts a CCHH-type zinc-finger fold; it reads TVCKSCGMIYTASNPEDEMQHVQHH. Ser-512 bears the Phosphoserine mark.

Belongs to the acetyltransferase family. ECO subfamily. Widely expressed in fetal tissues. In adult, it is expressed in thymus, placenta and small intestine.

The protein localises to the nucleus. It is found in the chromosome. It catalyses the reaction L-lysyl-[protein] + acetyl-CoA = N(6)-acetyl-L-lysyl-[protein] + CoA + H(+). Functionally, acetyltransferase required for the establishment of sister chromatid cohesion. Couples the processes of cohesion and DNA replication to ensure that only sister chromatids become paired together. In contrast to the structural cohesins, the deposition and establishment factors are required only during the S phase. Acetylates the cohesin component SMC3. In Homo sapiens (Human), this protein is N-acetyltransferase ESCO2.